The chain runs to 214 residues: Pyrrolidone-carboxylate peptidase (214 aa).

Residues Glu80, Cys143, and His166 contribute to the active site.

Belongs to the peptidase C15 family. As to quaternary structure, homotetramer.

It localises to the cytoplasm. It carries out the reaction Release of an N-terminal pyroglutamyl group from a polypeptide, the second amino acid generally not being Pro.. Functionally, removes 5-oxoproline from various penultimate amino acid residues except L-proline. In Klebsiella pneumoniae (strain 342), this protein is Pyrrolidone-carboxylate peptidase.